The primary structure comprises 214 residues: Mediator of RNA polymerase II transcription subunit 29 (214 aa).

The disordered stretch occupies residues 1-78; it reads MMNQMGMHMQ…QQQSQQTEKV (78 aa). Residues 15–34 show a composition bias toward gly residues; it reads VPGGPGGPVGMAGGPVGGVG. Residues 44–74 are compositionally biased toward low complexity; the sequence is QMQQQQQVAAQQQQQQQQQQQAQAHQQQSQQ.

Belongs to the Mediator complex subunit 29 family. In terms of assembly, component of the Mediator complex.

Its subcellular location is the nucleus. Functionally, component of the Mediator complex, a coactivator involved in the regulated transcription of nearly all RNA polymerase II-dependent genes. Mediator functions as a bridge to convey information from gene-specific regulatory proteins to the basal RNA polymerase II transcription machinery. Mediator is recruited to promoters by direct interactions with regulatory proteins and serves as a scaffold for the assembly of a functional preinitiation complex with RNA polymerase II and the general transcription factors. The polypeptide is Mediator of RNA polymerase II transcription subunit 29 (ix) (Aedes aegypti (Yellowfever mosquito)).